Consider the following 666-residue polypeptide: Polyamine deacetylase HDAC10 (666 aa).

The interval 1-323 (MGTALVYHED…VCMMVQTLLG (323 aa)) is histone deacetylase. Histidine 135 is an active-site residue.

It belongs to the histone deacetylase family. HD type 2 subfamily. Interacts with HDAC3. Interacts with HDAC2 and NCOR2/SMRT. Interacts with HSPA8/HSC70. Interacts with MSH2. As to expression, widely expressed.

Its subcellular location is the cytoplasm. It localises to the nucleus. The enzyme catalyses N(8)-acetylspermidine + H2O = spermidine + acetate. The catalysed reaction is N-acetylputrescine + H2O = putrescine + acetate. It carries out the reaction N-acetylcadaverine + H2O = cadaverine + acetate. It catalyses the reaction N(6)-acetyl-L-lysyl-[protein] + H2O = L-lysyl-[protein] + acetate. In terms of biological role, polyamine deacetylase (PDAC), which acts preferentially on N(8)-acetylspermidine, and also on acetylcadaverine and acetylputrescine. Exhibits attenuated catalytic activity toward N(1),N(8)-diacetylspermidine and very low activity, if any, toward N(1)-acetylspermidine. Histone deacetylase activity has been observed in vitro. Has also been shown to be involved in MSH2 deacetylation. The physiological relevance of protein/histone deacetylase activity is unclear and could be very weak. May play a role in the promotion of late stages of autophagy, possibly autophagosome-lysosome fusion and/or lysosomal exocytosis in neuroblastoma cells. May play a role in homologous recombination. May promote DNA mismatch repair. The sequence is that of Polyamine deacetylase HDAC10 (Hdac10) from Mus musculus (Mouse).